Here is a 512-residue protein sequence, read N- to C-terminus: Annexin A7 (512 aa).

Residues 14–38 (GYPGGDPSYPPAAQQAFPGGQFPPA) show a composition bias toward low complexity. Disordered regions lie at residues 14–62 (GYPG…GYPH) and 146–190 (GGFS…AQPT). The span at 39-52 (AGGGAFPPASGGGN) shows a compositional bias: gly residues. A compositionally biased stretch (low complexity) spans 164-182 (MPGQMPGQMPGQAPSGYPS). Annexin repeat units follow at residues 209–279 (FDAL…ALFM), 280–351 (PSTY…SIMA), 364–436 (QQAE…AVLQ), and 440–511 (NRPL…AISG).

Belongs to the annexin family.

Functionally, calcium/phospholipid-binding protein which promotes membrane fusion and is involved in exocytosis. This chain is Annexin A7 (anxa7), found in Xenopus laevis (African clawed frog).